The following is an 832-amino-acid chain: Prickle-like protein 1 (832 aa).

Residues 14–122 (FGCQRSSTSD…TIKLLSRAVM (109 aa)) form the PET domain. LIM zinc-binding domains lie at 124–188 (AVCE…ELLK), 189–249 (PRCS…LYAE), and 250–313 (YCET…EDIH). The tract at residues 314 to 342 (ASDSSDSAFQSARSRDSRRSVRMGRSSRS) is disordered. Residues Ser-315, Ser-592, and Ser-595 each carry the phosphoserine modification. Disordered stretches follow at residues 663–688 (HFEE…DNAL) and 765–832 (SSST…CIIS). The span at 670 to 681 (RPHHHRHRRSRK) shows a compositional bias: basic residues. Ser-684 carries the phosphoserine modification. Residues 798 to 815 (DLSSPASALPTPQFTQRT) show a composition bias toward polar residues. Positions 816–832 (TKSKKKKGHKGKNCIIS) are enriched in basic residues. A Cysteine methyl ester modification is found at Cys-829. Residue Cys-829 is the site of S-farnesyl cysteine attachment. Residues 830-832 (IIS) constitute a propeptide, removed in mature form.

This sequence belongs to the prickle / espinas / testin family. As to quaternary structure, interacts with REST.

Its subcellular location is the nucleus membrane. It is found in the cytoplasm. The protein localises to the cytosol. In terms of biological role, involved in the planar cell polarity pathway that controls convergent extension during gastrulation and neural tube closure. Convergent extension is a complex morphogenetic process during which cells elongate, move mediolaterally, and intercalate between neighboring cells, leading to convergence toward the mediolateral axis and extension along the anteroposterior axis. Necessary for nuclear localization of REST. May serve as nuclear receptor. The protein is Prickle-like protein 1 (Prickle1) of Mus musculus (Mouse).